Consider the following 223-residue polypeptide: Cytidylate kinase (223 aa).

10–18 (GPASSGKST) serves as a coordination point for ATP.

This sequence belongs to the cytidylate kinase family. Type 1 subfamily.

It localises to the cytoplasm. The catalysed reaction is CMP + ATP = CDP + ADP. The enzyme catalyses dCMP + ATP = dCDP + ADP. The chain is Cytidylate kinase from Streptococcus pneumoniae (strain Hungary19A-6).